The chain runs to 102 residues: PqqA binding protein (102 aa).

It belongs to the PqqD family. Monomer. Interacts with PqqE.

It participates in cofactor biosynthesis; pyrroloquinoline quinone biosynthesis. Functions as a PqqA binding protein and presents PqqA to PqqE, in the pyrroloquinoline quinone (PQQ) biosynthetic pathway. The chain is PqqA binding protein from Rhodopseudomonas palustris (strain ATCC BAA-98 / CGA009).